The following is a 25-amino-acid chain: Gamma-conotoxin PiVIIA (25 aa).

Intrachain disulfides connect Cys-1/Cys-15, Cys-8/Cys-19, and Cys-14/Cys-24. 4-hydroxyproline is present on Pro-4. 2 positions are modified to 4-carboxyglutamate: Glu-13 and Glu-20.

Belongs to the conotoxin O2 superfamily. Expressed by the venom duct.

Its subcellular location is the secreted. Functionally, micromolar concentrations of PiVIIA increase the magnitude of the macroscopic calcium current in DRG neurons from rat. An increase, even modest of the calcium current, may have a significant impact in the excitability and electrical activity of neurons, and may set up PiVIIA as a member of the pharmacological family of the gamma-conotoxins. The polypeptide is Gamma-conotoxin PiVIIA (Conus princeps (Prince cone)).